A 325-amino-acid chain; its full sequence is Probable cell division protein WhiA (325 aa).

Residues 280–313 constitute a DNA-binding region (H-T-H motif); sequence SLKELGNMLEKPLGKSGVNHRLRKIDKIAEELRK.

This sequence belongs to the WhiA family.

Its function is as follows. Involved in cell division and chromosome segregation. The protein is Probable cell division protein WhiA of Caldicellulosiruptor bescii (strain ATCC BAA-1888 / DSM 6725 / KCTC 15123 / Z-1320) (Anaerocellum thermophilum).